The following is a 51-amino-acid chain: Large ribosomal subunit protein eL40 (51 aa).

This sequence belongs to the eukaryotic ribosomal protein eL40 family.

The sequence is that of Large ribosomal subunit protein eL40 from Thermofilum pendens (strain DSM 2475 / Hrk 5).